The primary structure comprises 409 residues: NADH-quinone oxidoreductase subunit D 1 (409 aa).

This sequence belongs to the complex I 49 kDa subunit family. NDH-1 is composed of 14 different subunits. Subunits NuoB, C, D, E, F, and G constitute the peripheral sector of the complex.

It localises to the cell inner membrane. It catalyses the reaction a quinone + NADH + 5 H(+)(in) = a quinol + NAD(+) + 4 H(+)(out). In terms of biological role, NDH-1 shuttles electrons from NADH, via FMN and iron-sulfur (Fe-S) centers, to quinones in the respiratory chain. The immediate electron acceptor for the enzyme in this species is believed to be ubiquinone. Couples the redox reaction to proton translocation (for every two electrons transferred, four hydrogen ions are translocated across the cytoplasmic membrane), and thus conserves the redox energy in a proton gradient. This is NADH-quinone oxidoreductase subunit D 1 from Solibacter usitatus (strain Ellin6076).